Consider the following 459-residue polypeptide: Sensor histidine kinase SpaK (459 aa).

Over 1 to 18 the chain is Cytoplasmic; the sequence is MGIGFKGRKTLLRELVKY. The chain crosses the membrane as a helical span at residues 19 to 39; it reads MVTLCISLVVLALLYIFINTI. Topologically, residues 40–155 are extracellular; the sequence is AMNTGFSHPA…RKYLPNYELT (116 aa). A helical transmembrane segment spans residues 156–176; it reads SICILIILLIIVISIITTYFA. Residues 177–459 lie on the Cytoplasmic side of the membrane; that stretch reads NRLRKHFETL…VRVKIPLRNE (283 aa). Residues 244–458 form the Histidine kinase domain; sequence ALAHEIKIPI…EVRVKIPLRN (215 aa). His247 is subject to Phosphohistidine; by autocatalysis.

It localises to the cell membrane. It catalyses the reaction ATP + protein L-histidine = ADP + protein N-phospho-L-histidine.. Its function is as follows. Member of the two-component regulatory system SpaK/SpaR involved in the regulation of the biosynthesis of lantibiotic subtilin. SpaK may function as a membrane-associated protein kinase that phosphorylates SpaR in response to environmental signals. This chain is Sensor histidine kinase SpaK (spaK), found in Bacillus subtilis.